Reading from the N-terminus, the 240-residue chain is 1-(5-phosphoribosyl)-5-[(5-phosphoribosylamino)methylideneamino] imidazole-4-carboxamide isomerase (240 aa).

Residue Asp-10 is the Proton acceptor of the active site. Asp-131 acts as the Proton donor in catalysis.

The protein belongs to the HisA/HisF family.

It localises to the cytoplasm. The catalysed reaction is 1-(5-phospho-beta-D-ribosyl)-5-[(5-phospho-beta-D-ribosylamino)methylideneamino]imidazole-4-carboxamide = 5-[(5-phospho-1-deoxy-D-ribulos-1-ylimino)methylamino]-1-(5-phospho-beta-D-ribosyl)imidazole-4-carboxamide. The protein operates within amino-acid biosynthesis; L-histidine biosynthesis; L-histidine from 5-phospho-alpha-D-ribose 1-diphosphate: step 4/9. The protein is 1-(5-phosphoribosyl)-5-[(5-phosphoribosylamino)methylideneamino] imidazole-4-carboxamide isomerase of Shouchella clausii (strain KSM-K16) (Alkalihalobacillus clausii).